Here is a 793-residue protein sequence, read N- to C-terminus: DnaJ homolog subfamily C member 10 (793 aa).

Positions 1–32 (MGVWLNKDDFIRDLKRISLCLLILYVVVVVGT) are cleaved as a signal peptide. The J domain occupies 35-100 (NFYSLLGVSK…DLRKKYDKYG (66 aa)). The region spanning 130-232 (EIITLERREF…ESLVAFAMQH (103 aa)) is the Thioredoxin 1 domain. Cys-158 and Cys-161 form a disulfide bridge. 2 trxb regions span residues 235-350 (STVT…LPDF) and 348-463 (PDFE…PQNF). Thioredoxin domains lie at 454-553 (HVTT…IEDL), 557-665 (SVVS…SWGL), and 671-776 (ASID…ALIY). Cys-480 and Cys-483 form a disulfide bridge. A glycan (N-linked (GlcNAc...) asparagine) is linked at Asn-530. 2 disulfides stabilise this stretch: Cys-588–Cys-591 and Cys-700–Cys-703. The Prevents secretion from ER signature appears at 790-793 (KDEL).

As to quaternary structure, interacts with HSPA5 (via its J domain). Interacts with EDEM1. Ubiquitous. Particularly abundant in secretory tissues. Ubiquitous in fetal tissues and tumor tissues. Higher expression in fetal tissues than in adult tissues. Expressed in testis, pancreas, fetal thymus and fetal kidney. High expression in heart, liver, kidney, and testis. Low expression in spleen and skeletal muscle.

The protein localises to the endoplasmic reticulum lumen. Its function is as follows. Endoplasmic reticulum disulfide reductase involved both in the correct folding of proteins and degradation of misfolded proteins. Required for efficient folding of proteins in the endoplasmic reticulum by catalyzing the removal of non-native disulfide bonds formed during the folding of proteins, such as LDLR. Also involved in endoplasmic reticulum-associated degradation (ERAD) by reducing incorrect disulfide bonds in misfolded glycoproteins recognized by EDEM1. Interaction with HSPA5 is required its activity, not for the disulfide reductase activity, but to facilitate the release of DNAJC10 from its substrate. Promotes apoptotic signaling pathway in response to endoplasmic reticulum stress. This is DnaJ homolog subfamily C member 10 (Dnajc10) from Mus musculus (Mouse).